We begin with the raw amino-acid sequence, 57 residues long: Potassium channel toxin alpha-KTx 8.7 (57 aa).

A signal peptide spans 1 to 28; it reads MSRLYAIILIALVFNVIMTIMPDMKVEA. 3 disulfides stabilise this stretch: Cys-31–Cys-47, Cys-34–Cys-52, and Cys-38–Cys-54.

Expressed by the venom gland.

The protein resides in the secreted. Inhibits voltage-gated potassium channel rKv1.1/KCNA1 at nanomolar ranges (IC(50)=8.5 nM). The sequence is that of Potassium channel toxin alpha-KTx 8.7 from Mesobuthus eupeus (Lesser Asian scorpion).